Here is a 113-residue protein sequence, read N- to C-terminus: Teretoxin Tan14.1 (113 aa).

The first 21 residues, 1–21 (MALEAQMTLRMFVLVAMASTV), serve as a signal peptide directing secretion. A propeptide spanning residues 22–86 (HVLSSSFSED…DETSSRTGKR (65 aa)) is cleaved from the precursor.

Belongs to the teretoxin N (TN) superfamily. Contains 2 disulfide bonds. In terms of tissue distribution, expressed by the venom duct.

The protein resides in the secreted. This is Teretoxin Tan14.1 from Terebra anilis (Auger snail).